Here is a 340-residue protein sequence, read N- to C-terminus: N(4)-(Beta-N-acetylglucosaminyl)-L-asparaginase (340 aa).

Residues 1–45 form the signal peptide; the sequence is MRIIYKQQTMNNNRRDFIKKLGIATAAIAINPLEAKNLLDTSEPK. The active-site Nucleophile is Thr-197. Substrate-binding positions include 225–228 and 248–251; these read RVGD and TGHG.

The protein belongs to the Ntn-hydrolase family. Heterotetramer of two alpha and two beta chains arranged as a dimer of alpha/beta heterodimers. In terms of processing, cleaved into an alpha and beta chain by autocatalysis; this activates the enzyme. The N-terminal residue of the beta subunit is responsible for the nucleophile hydrolase activity.

The protein localises to the periplasm. The catalysed reaction is N(4)-(beta-N-acetyl-D-glucosaminyl)-L-asparagine + H2O = N-acetyl-beta-D-glucosaminylamine + L-aspartate + H(+). Its function is as follows. Cleaves the GlcNAc-Asn bond which joins oligosaccharides to the peptide of asparagine-linked glycoproteins. Requires that the glycosylated asparagine moiety is not substituted on its N-(R1) and C- (R2) terminus. The sequence is that of N(4)-(Beta-N-acetylglucosaminyl)-L-asparaginase from Elizabethkingia miricola (Chryseobacterium miricola).